The chain runs to 503 residues: MRAKVKILKIKTGSFNVFISPRDAEEWKLHPNDLVKIESGKRSIYASVAIGDFIEDGEVGLSQDILSSYQFSEGEVVSITPSGTPESVKYIKKKMKGEKLRKVEIETIIRDIVDRKLRNTEISAFITAIEINGLSMDEIAALTIAMAETGDMLDIDRKPIMDVHSIGGVPGNKTNILVVPIVAAAGLTIPKTSSRAITSAAGTADVVEVLTNVKLSLDEIKRIVEKIGACLVWGGALNLAPADDLTIHVERRLSLDPRGLMLASIMSKKYAIGSQYILIDIPTGKGAKVETMDEARTLAKDFIELGKKLGQYVEVAITYGGQPIGYAIGPALEAKEALETLMTGKGPGSLVEKATGLAGILLEMGGVAPKGMGKKVAKEILESGKAYEKMKEIIEEQGGDPNIKPEDIPIGDKTYTIHAQTGGYVTGIDNRAITAIAREAGAPEDKGAGVRLHVKVGEKVKEGDPLITIHAESESRLEKAIVLARRLEPIKIEGMVLQVIGNI.

Residues Gly168, 194–199, and Thr203 contribute to the AMP site; that span reads SRAITS. The active-site Proton donor is the Asp256. Positions 264 and 288 each coordinate AMP.

Belongs to the thymidine/pyrimidine-nucleoside phosphorylase family. Type 2 subfamily.

The catalysed reaction is AMP + phosphate = alpha-D-ribose 1,5-bisphosphate + adenine. It carries out the reaction CMP + phosphate = cytosine + alpha-D-ribose 1,5-bisphosphate. The enzyme catalyses UMP + phosphate = alpha-D-ribose 1,5-bisphosphate + uracil. Its function is as follows. Catalyzes the conversion of AMP and phosphate to adenine and ribose 1,5-bisphosphate (R15P). Exhibits phosphorylase activity toward CMP and UMP in addition to AMP. Functions in an archaeal AMP degradation pathway, together with R15P isomerase and RubisCO. This is AMP phosphorylase from Pyrococcus horikoshii (strain ATCC 700860 / DSM 12428 / JCM 9974 / NBRC 100139 / OT-3).